A 478-amino-acid polypeptide reads, in one-letter code: uncharacterized protein (478 aa).

The region spanning methionine 2 to glutamate 120 is the RCK N-terminal domain.

This is an uncharacterized protein from Methanocaldococcus jannaschii (strain ATCC 43067 / DSM 2661 / JAL-1 / JCM 10045 / NBRC 100440) (Methanococcus jannaschii).